Reading from the N-terminus, the 577-residue chain is Cytidine monophosphate-N-acetylneuraminic acid hydroxylase (577 aa).

The propeptide occupies 1 to 4 (MMDR). Positions 14–112 (LSPAEVANLK…IEMDENNGLS (99 aa)) constitute a Rieske domain. Positions 54, 56, 75, and 78 each coordinate [2Fe-2S] cluster.

The protein belongs to the CMP-Neu5Ac hydroxylase family. It depends on [2Fe-2S] cluster as a cofactor. Expressed in all tissues tested, except in brain.

The protein localises to the cytoplasm. It localises to the endoplasmic reticulum. The enzyme catalyses CMP-N-acetyl-beta-neuraminate + 2 Fe(II)-[cytochrome b5] + O2 + 2 H(+) = CMP-N-glycoloyl-beta-neuraminate + 2 Fe(III)-[cytochrome b5] + H2O. It participates in amino-sugar metabolism; N-acetylneuraminate metabolism. In terms of biological role, sialic acids are components of carbohydrate chains of glycoconjugates and are involved in cell-cell recognition and cell-pathogen interactions. Catalyzes the conversion of CMP-N-acetylneuraminic acid (CMP-Neu5Ac) into its hydroxylated derivative CMP-N-glycolylneuraminic acid (CMP-Neu5Gc), a sialic acid abundantly expressed at the surface of many cells. The chain is Cytidine monophosphate-N-acetylneuraminic acid hydroxylase (Cmah) from Mus musculus (Mouse).